Reading from the N-terminus, the 123-residue chain is UPF0102 protein Pput_4400 (123 aa).

The protein belongs to the UPF0102 family.

The chain is UPF0102 protein Pput_4400 from Pseudomonas putida (strain ATCC 700007 / DSM 6899 / JCM 31910 / BCRC 17059 / LMG 24140 / F1).